The primary structure comprises 436 residues: 3-ketoacyl-CoA thiolase (436 aa).

Cys-99 (acyl-thioester intermediate) is an active-site residue. Residues His-392 and Cys-422 each act as proton acceptor in the active site.

Belongs to the thiolase-like superfamily. Thiolase family. Heterotetramer of two alpha chains (FadJ) and two beta chains (FadI).

The protein localises to the cytoplasm. It catalyses the reaction an acyl-CoA + acetyl-CoA = a 3-oxoacyl-CoA + CoA. It functions in the pathway lipid metabolism; fatty acid beta-oxidation. Its function is as follows. Catalyzes the final step of fatty acid oxidation in which acetyl-CoA is released and the CoA ester of a fatty acid two carbons shorter is formed. In Salmonella paratyphi A (strain ATCC 9150 / SARB42), this protein is 3-ketoacyl-CoA thiolase.